The sequence spans 324 residues: N-acetylmuramoyl-L-alanine amidase sle1 (324 aa).

The first 25 residues, 1–25 (MQKKYITAIIGTTALSALASTHAQA), serve as a signal peptide directing secretion. 3 LysM domains span residues 27 to 70 (TTHT…VLKV), 84 to 127 (TVYT…KLKV), and 147 to 190 (ATYT…KLKV). Positions 200-324 (SNNTRSNGGY…YQVRNYKFIH (125 aa)) constitute a Peptidase C51 domain.

The protein resides in the secreted. It is found in the cell surface. The catalysed reaction is Hydrolyzes the link between N-acetylmuramoyl residues and L-amino acid residues in certain cell-wall glycopeptides.. In terms of biological role, peptidoglycan hydrolase involved in the splitting of the septum during cell division. The polypeptide is N-acetylmuramoyl-L-alanine amidase sle1 (sle1) (Staphylococcus epidermidis (strain ATCC 12228 / FDA PCI 1200)).